Consider the following 159-residue polypeptide: Ribosomal RNA large subunit methyltransferase H (159 aa).

S-adenosyl-L-methionine contacts are provided by residues L76, G108, and 127–132; that span reads FSKMTF.

The protein belongs to the RNA methyltransferase RlmH family. As to quaternary structure, homodimer.

Its subcellular location is the cytoplasm. It carries out the reaction pseudouridine(1915) in 23S rRNA + S-adenosyl-L-methionine = N(3)-methylpseudouridine(1915) in 23S rRNA + S-adenosyl-L-homocysteine + H(+). Its function is as follows. Specifically methylates the pseudouridine at position 1915 (m3Psi1915) in 23S rRNA. In Exiguobacterium sp. (strain ATCC BAA-1283 / AT1b), this protein is Ribosomal RNA large subunit methyltransferase H.